Consider the following 253-residue polypeptide: MNGPIIMTREERMKIVHEIKERILDKYGDDVKAIGVYGSLGRQTDGPYSDIEMMCVMSTEEAEFSHEWTTGEWKVEVNFDSEEILLDYASQVESDWPLTHGQFFSILPIYDSGGYLEKVYQTAKSVEAQKFHDAICALIVEELFEYAGKWRNIRVQGPTTFLPSLTVQVAMAGAMLIGLHHRICYTTSASVLTEAVKQSDLPSGYDHLCQFVMSGQLSDSEKLLESLENFWNGIQEWTERHGYIVDVSKRIPF.

As to quaternary structure, homodimer.

The enzyme catalyses kanamycin A + ATP = 4'-adenylylkanamycin A + diphosphate. It catalyses the reaction amikacin + ATP = 4'-adenylylamikacin + diphosphate. The catalysed reaction is neomycin B + ATP = 4'-adenylylneomycin B + diphosphate. It carries out the reaction paromomycin + ATP = 4'-adenylylparomomycin + diphosphate. The enzyme catalyses ribostamycin + ATP = 4'-adenylylribostamycin + diphosphate. It catalyses the reaction tobramycin + ATP = 4'-adenylyltobramycin + diphosphate. The catalysed reaction is kanamycin A + CTP = 4'-cytidylylkanamycin A + diphosphate. It carries out the reaction kanamycin A + GTP = 4'-guanylylkanamycin A + diphosphate. The enzyme catalyses kanamycin A + ITP = 4'-inosinylylkanamycin A + diphosphate. It catalyses the reaction dTTP + kanamycin A = 4'-thymidylylkanamycin A + diphosphate. The catalysed reaction is kanamycin A + UTP = 4'-uridylylkanamycin A + diphosphate. It carries out the reaction kanamycin A + dATP = 4'-(2'-deoxyadenylyl)kanamycin A + diphosphate. The enzyme catalyses kanamycin A + dCTP = 4'-(2'-deoxycytidylyl)kanamycin A + diphosphate. It catalyses the reaction kanamycin A + dGTP = 4'-(2'-deoxyguanylyl)kanamycin A + diphosphate. The catalysed reaction is dUTP + kanamycin A = 4'-(2'-deoxyuridylyl)kanamycin A + diphosphate. It carries out the reaction amikacin + GTP = 4'-guanylylamikacin + diphosphate. The enzyme catalyses amikacin + ITP = 4'-inosinylylamikacin + diphosphate. It catalyses the reaction amikacin + CTP = 4'-cytidylylamikacin + diphosphate. The catalysed reaction is amikacin + UTP = 4'-uridylylamikacin + diphosphate. It carries out the reaction amikacin + dTTP = 4'-thymidylylamikacin + diphosphate. Functionally, inactivates aminoglycoside antibiotics such as kanamycin by catalyzing the transfer of a nucleotidyl group from nucleoside triphosphates such as (d)ATP to the 4'-hydroxyl group of the aminoglycoside. The sequence is that of Aminoglycoside nucleotidyltransferase (4') from Bacillus sp.